Reading from the N-terminus, the 246-residue chain is Envelope glycoprotein gp95 (246 aa).

Topologically, residues 1-192 (IPSRPVGGPC…EWAVHLLKGL (192 aa)) are extracellular. A glycan (N-linked (GlcNAc...) asparagine; by host) is linked at N31. C50 and C86 are joined by a disulfide. The fusion peptide stretch occupies residues 58-78 (GPTARIFASILAPGVAAAQAL). The stretch at 75–125 (AQALREIERLACWSVKQANLTTSLLGDLLDDVTSIRHAVLQNRAAIDFLLL) forms a coiled coil. N-linked (GlcNAc...) asparagine; by host glycosylation is present at N93. Residues 114 to 130 (LQNRAAIDFLLLAHGHG) are immunosuppression. The cysteines at positions 131 and 138 are disulfide-linked. N-linked (GlcNAc...) asparagine; by host glycosylation is present at N141. The stretch at 143–173 (SDQSESIQKKFQLMKEHVNKIGVDSDLIGSW) forms a coiled coil. A helical transmembrane segment spans residues 193-213 (LLGLVVILLLVVCLPCLLQML). 2 S-palmitoyl cysteine; by host lipidation sites follow: C205 and C208. The Cytoplasmic segment spans residues 214–246 (CGNRRKMINNSISYHTEYKKLQKACGQPESRIV).

This sequence belongs to the Alpharetroviruses envelope glycoprotein family. Heterodimer with the transmembrane protein. The mature envelope protein (Env) consists of a trimer of SU-TM heterodimers attached by a labile interchain disulfide bond. Interacts with the host cell entry receptor TVA isoforms pg900 and pg800; this interaction allows the viral attachment. As to quaternary structure, heterodimer with the surface protein. The mature envelope protein (Env) consists of a trimer of SU-TM heterodimers attached by a labile interchain disulfide bond. In terms of processing, specific enzymatic cleavages in vivo yield mature proteins. Envelope glycoproteins are synthesized as an inactive precursor that is N-glycosylated and processed likely by host cell furin or by a furin-like protease in the Golgi to yield the mature SU and TM proteins. The cleavage site between SU and TM requires the minimal sequence [KR]-X-[KR]-R. The transmembrane protein is palmitoylated. Palmitoylation is necessary for glycoprotein function and infectivity.

It localises to the virion membrane. Its subcellular location is the host cell membrane. Functionally, the surface protein (SU) attaches the virus to the host cell entry receptor TVA. This interaction triggers the refolding of the transmembrane protein (TM) thereby unmasking its fusion peptide and the formation of a reactive thiolate to activate its fusogenic potential. Fusion occurs at the host cell plasma membrane. In terms of biological role, the transmembrane protein (TM) acts as a class I viral fusion protein. Under the current model, the protein has at least 3 conformational states: pre-fusion native state, pre-hairpin intermediate state, and post-fusion hairpin state. During viral and target cell membrane fusion, the coiled coil regions (heptad repeats) assume a trimer-of-hairpins structure, positioning the fusion peptide in close proximity to the C-terminal region of the ectodomain. The formation of this structure appears to drive apposition and subsequent fusion of viral and target cell membranes. Membranes fusion leads to delivery of the nucleocapsid into the cytoplasm. The protein is Envelope glycoprotein gp95 (env) of Rous sarcoma virus subgroup A (strain Schmidt-Ruppin) (RSV-SR-A).